The sequence spans 320 residues: Cytochrome f (320 aa).

Residues 1–35 form the signal peptide; it reads MQTRNTFSWIREEITRSISVLLMIYIITWASISSA. Tyr36, Cys56, Cys59, and His60 together coordinate heme. A helical membrane pass occupies residues 286–306; the sequence is VQGLLFFLGSVVLAQIFLVLK.

This sequence belongs to the cytochrome f family. In terms of assembly, the 4 large subunits of the cytochrome b6-f complex are cytochrome b6, subunit IV (17 kDa polypeptide, petD), cytochrome f and the Rieske protein, while the 4 small subunits are PetG, PetL, PetM and PetN. The complex functions as a dimer. Requires heme as cofactor.

The protein localises to the plastid. The protein resides in the chloroplast thylakoid membrane. Its function is as follows. Component of the cytochrome b6-f complex, which mediates electron transfer between photosystem II (PSII) and photosystem I (PSI), cyclic electron flow around PSI, and state transitions. This chain is Cytochrome f, found in Lobularia maritima (Sweet alyssum).